Here is a 160-residue protein sequence, read N- to C-terminus: Transcription elongation factor GreA (160 aa).

A coiled-coil region spans residues 49 to 73 (HAAKEEQSHNEGRIADLEDKLARAD).

The protein belongs to the GreA/GreB family.

Its function is as follows. Necessary for efficient RNA polymerase transcription elongation past template-encoded arresting sites. The arresting sites in DNA have the property of trapping a certain fraction of elongating RNA polymerases that pass through, resulting in locked ternary complexes. Cleavage of the nascent transcript by cleavage factors such as GreA or GreB allows the resumption of elongation from the new 3'terminus. GreA releases sequences of 2 to 3 nucleotides. The chain is Transcription elongation factor GreA from Rhodopseudomonas palustris (strain BisA53).